A 331-amino-acid chain; its full sequence is Biotin synthase (331 aa).

In terms of domain architecture, Radical SAM core spans 39–264 (SELQTCYLVS…VFPQSMVRLA (226 aa)). 3 residues coordinate [4Fe-4S] cluster: cysteine 54, cysteine 58, and cysteine 61. [2Fe-2S] cluster contacts are provided by cysteine 98, cysteine 130, cysteine 190, and arginine 262.

It belongs to the radical SAM superfamily. Biotin synthase family. As to quaternary structure, homodimer. The cofactor is [4Fe-4S] cluster. Requires [2Fe-2S] cluster as cofactor.

The enzyme catalyses (4R,5S)-dethiobiotin + (sulfur carrier)-SH + 2 reduced [2Fe-2S]-[ferredoxin] + 2 S-adenosyl-L-methionine = (sulfur carrier)-H + biotin + 2 5'-deoxyadenosine + 2 L-methionine + 2 oxidized [2Fe-2S]-[ferredoxin]. The protein operates within cofactor biosynthesis; biotin biosynthesis; biotin from 7,8-diaminononanoate: step 2/2. Its function is as follows. Catalyzes the conversion of dethiobiotin (DTB) to biotin by the insertion of a sulfur atom into dethiobiotin via a radical-based mechanism. This chain is Biotin synthase, found in Chlamydia abortus (strain DSM 27085 / S26/3) (Chlamydophila abortus).